Here is a 444-residue protein sequence, read N- to C-terminus: Spermatogenesis-associated protein 1 (444 aa).

Residues 145 to 160 show a composition bias toward basic and acidic residues; the sequence is GTIHRPDSLSLSKDEP. The disordered stretch occupies residues 145–229; the sequence is GTIHRPDSLS…DEGEEDDKAT (85 aa). The stretch at 268–403 forms a coiled coil; it reads SLLKIEREKI…RKLDTDKMKL (136 aa).

Interacts with IFT20.

The protein localises to the cytoplasmic vesicle. The protein resides in the secretory vesicle. It is found in the acrosome. In Rattus norvegicus (Rat), this protein is Spermatogenesis-associated protein 1 (Spata1).